The sequence spans 237 residues: ATP synthase subunit a (237 aa).

A run of 5 helical transmembrane segments spans residues 17-37, 75-95, 112-132, 179-201, and 214-234; these read LSDM…AVAA, FLTL…LGLP, DATV…YYGV, ILLG…GAAI, and GTIQ…HKVS.

This sequence belongs to the ATPase A chain family. F-type ATPases have 2 components, CF(1) - the catalytic core - and CF(0) - the membrane proton channel. CF(1) has five subunits: alpha(3), beta(3), gamma(1), delta(1), epsilon(1). CF(0) has three main subunits: a(1), b(2) and c(9-12). The alpha and beta chains form an alternating ring which encloses part of the gamma chain. CF(1) is attached to CF(0) by a central stalk formed by the gamma and epsilon chains, while a peripheral stalk is formed by the delta and b chains.

Its subcellular location is the cell membrane. In terms of biological role, key component of the proton channel; it plays a direct role in the translocation of protons across the membrane. This chain is ATP synthase subunit a, found in Geobacillus kaustophilus (strain HTA426).